A 440-amino-acid chain; its full sequence is NADH-quinone oxidoreductase subunit D 1 (440 aa).

The protein belongs to the complex I 49 kDa subunit family. NDH-1 is composed of 14 different subunits. Subunits NuoB, C, D, E, F, and G constitute the peripheral sector of the complex.

The protein localises to the cell inner membrane. It carries out the reaction a quinone + NADH + 5 H(+)(in) = a quinol + NAD(+) + 4 H(+)(out). In terms of biological role, NDH-1 shuttles electrons from NADH, via FMN and iron-sulfur (Fe-S) centers, to quinones in the respiratory chain. The immediate electron acceptor for the enzyme in this species is believed to be a menaquinone. Couples the redox reaction to proton translocation (for every two electrons transferred, four hydrogen ions are translocated across the cytoplasmic membrane), and thus conserves the redox energy in a proton gradient. The polypeptide is NADH-quinone oxidoreductase subunit D 1 (Chloroherpeton thalassium (strain ATCC 35110 / GB-78)).